Reading from the N-terminus, the 548-residue chain is MASKEILFDAKAREKLSRGVDKLANAVKVTLGPKGRNVVIEKSFGSPVITKDGVSVAKEIELEDKFENMGAQMVKEVASKTSDIAGDGTTTATVLAQAIYREGVKLVAAGRNPMAIKRGIDKAVVAVTKELSDITKPTRDQKEIAQVGTISANSDTTIGNIIAEAMAKVGKEGVITVEEAKGLETTLDVVEGMKFDRGYLSPYFVTNPEKMVCELDNPYILCNEKKITSMKDMLPILEQVAKVNRPLLIIAEDVEGEALATLVVNKLRGALQVVAVKAPGFGERRKAMLEDIAILTGGEAIFEDRGIKLENVSLSSLGTAKRVVIDKENTTIVDGAGKSEDIKARVKQIRAQIEETSSDYDREKLQERLAKLVGGVAVIHVGAATETEMKEKKDRVEDALNATRAAVEEGIVPGGGTAFVRSIKVLDDIKPADDDELAGLNIIRRSLEEPLRQIAANAGYEGSIVVEKVREAKDGFGFNAASGEYEDLIKAGVIDPKKVTRIALQNAASVASLLLTTECAIAEKPEPKKDMPMPGGGMGGMGGMDGMY.

Residues 30–33 (TLGP), lysine 51, 87–91 (DGTTT), glycine 415, 479–481 (NAA), and aspartate 495 each bind ATP.

The protein belongs to the chaperonin (HSP60) family. In terms of assembly, forms a cylinder of 14 subunits composed of two heptameric rings stacked back-to-back. Interacts with the co-chaperonin GroES.

The protein localises to the cytoplasm. The catalysed reaction is ATP + H2O + a folded polypeptide = ADP + phosphate + an unfolded polypeptide.. In terms of biological role, together with its co-chaperonin GroES, plays an essential role in assisting protein folding. The GroEL-GroES system forms a nano-cage that allows encapsulation of the non-native substrate proteins and provides a physical environment optimized to promote and accelerate protein folding. The protein is Chaperonin GroEL of Lawsonia intracellularis (strain PHE/MN1-00).